Here is a 365-residue protein sequence, read N- to C-terminus: Probable L-tyrosine/L-aspartate decarboxylase (365 aa).

At lysine 225 the chain carries N6-(pyridoxal phosphate)lysine.

This sequence belongs to the group II decarboxylase family. MfnA subfamily. Pyridoxal 5'-phosphate is required as a cofactor.

The enzyme catalyses L-tyrosine + H(+) = tyramine + CO2. It catalyses the reaction L-aspartate + H(+) = beta-alanine + CO2. It functions in the pathway cofactor biosynthesis; methanofuran biosynthesis. The protein operates within cofactor biosynthesis; coenzyme A biosynthesis. Catalyzes the decarboxylation of L-tyrosine to produce tyramine for methanofuran biosynthesis. Can also catalyze the decarboxylation of L-aspartate to produce beta-alanine for coenzyme A (CoA) biosynthesis. This chain is Probable L-tyrosine/L-aspartate decarboxylase, found in Methanocorpusculum labreanum (strain ATCC 43576 / DSM 4855 / Z).